Consider the following 110-residue polypeptide: uncharacterized protein (110 aa).

Residues S86–F110 form a disordered region. The segment covering K95–P104 has biased composition (basic residues).

This is an uncharacterized protein from Arabidopsis thaliana (Mouse-ear cress).